The following is a 94-amino-acid chain: Translation initiation factor IF-1 (94 aa).

Residues 1–72 (MAKEELIQFE…EKGRLIFRHK (72 aa)) enclose the S1-like domain. Positions 71-94 (HKDERPGGTGAPRSGPPRGQFRRR) are disordered.

Belongs to the IF-1 family. Component of the 30S ribosomal translation pre-initiation complex which assembles on the 30S ribosome in the order IF-2 and IF-3, IF-1 and N-formylmethionyl-tRNA(fMet); mRNA recruitment can occur at any time during PIC assembly.

It localises to the cytoplasm. One of the essential components for the initiation of protein synthesis. Stabilizes the binding of IF-2 and IF-3 on the 30S subunit to which N-formylmethionyl-tRNA(fMet) subsequently binds. Helps modulate mRNA selection, yielding the 30S pre-initiation complex (PIC). Upon addition of the 50S ribosomal subunit IF-1, IF-2 and IF-3 are released leaving the mature 70S translation initiation complex. The polypeptide is Translation initiation factor IF-1 (Rhodopseudomonas palustris (strain HaA2)).